The following is a 1178-amino-acid chain: F-box/WD repeat-containing protein A-like protein (1178 aa).

Residues 1–208 enclose the START domain; that stretch reads MQYVNGMDIV…TLPNLIKYIK (208 aa). Disordered regions lie at residues 223 to 296, 569 to 594, and 618 to 649; these read KTPD…NLNE, SLIINSPPNSNNHENEKKRKFRDNGI, and SSSSSSTSSSLTFSPPQQLSSPTSSSSSSTFS. Composition is skewed to low complexity over residues 229-293 and 571-580; these read NPNL…SNEN and IINSPPNSNN. Residues 717-763 enclose the F-box domain; sequence CSLFDLLPYEMIQYIFTLMDATHLIRMSRTCKYFNRICLDDNIWRDL. A disordered region spans residues 804-841; it reads KKSNNSSPLSASSSSSSPSPPLLPPPPPPIPQLPDMLL. The segment covering 809-820 has biased composition (low complexity); that stretch reads SSPLSASSSSSS. Over residues 821-835 the composition is skewed to pro residues; sequence PSPPLLPPPPPPIPQ. 7 WD repeats span residues 886-923, 925-979, 981-1017, 1020-1059, 1062-1100, 1104-1141, and 1146-1178; these read GHKGKISCLQMAPNQIFTGSKDKEFKSWNIATKQCEST, RCGA…IEKE, RFLYVSNGFIFMKRDIYSYESNTVKLYDSETEQELQM, IENTKINHCKIGRFENFCMIACTDKTVKLWDIDSNKTELV, GHKGSVNCLDFLNDYQLITGSSDKTIRMWDIRNPSSAIH, SHSSKVKAISIYNNLRMCTGDEDSICLWNLEGSNEPNL, and NNLSPVECLSIDDETMLAGFSDGEVSYYDFNSK.

Its function is as follows. Substrate recognition component of a SCF (SKP1-CUL1-F-box protein) E3 ubiquitin-protein ligase complex which mediates the ubiquitination and subsequent proteasomal degradation of target proteins. The chain is F-box/WD repeat-containing protein A-like protein from Dictyostelium discoideum (Social amoeba).